We begin with the raw amino-acid sequence, 265 residues long: MICOS complex subunit Mic27 (265 aa).

Residues 1-27 (MAAFRMGKLTTIPAGLIYASINVRLAK) constitute a mitochondrion transit peptide. The Mitochondrial intermembrane portion of the chain corresponds to 28–110 (EEEPKKQLVR…YVYLKNPPQD (83 aa)). A helical membrane pass occupies residues 111 to 129 (FLPKMGVITASGLAGLLSA). Residues 130-137 (RKGSRFKK) are Mitochondrial matrix-facing. Residues 138–155 (IAYPLGLATLGATVCYPA) form a helical membrane-spanning segment. The Mitochondrial intermembrane portion of the chain corresponds to 156-265 (QSVIIAKITG…DDKDMYSTRS (110 aa)). Disordered stretches follow at residues 187-215 (SENE…PDLK) and 229-265 (VIKS…STRS). Ser-204 bears the Phosphoserine mark. Over residues 229 to 241 (VIKSESTSGTTQF) the composition is skewed to polar residues. Residues 246–265 (KLMDHGQSHPDDKDMYSTRS) show a composition bias toward basic and acidic residues.

It belongs to the apolipoprotein O/MICOS complex subunit Mic27 family. Component of the mitochondrial contact site and cristae organizing system (MICOS) complex, composed of at least MICOS10/MIC10, CHCHD3/MIC19, CHCHD6/MIC25, APOOL/MIC27, IMMT/MIC60, APOO/MIC23/MIC26 and MICOS13/MIC13. This complex was also known under the names MINOS or MitOS complex. The MICOS complex associates with mitochondrial outer membrane proteins SAMM50, MTX1 and MTX2 (together described as components of the mitochondrial outer membrane sorting assembly machinery (SAM) complex) and DNAJC11, mitochondrial inner membrane protein TMEM11 and with HSPA9. The MICOS and SAM complexes together with DNAJC11 are part of a large protein complex spanning both membranes termed the mitochondrial intermembrane space bridging (MIB) complex. Interacts with MICOS10/MIC10, IMMT/MIC60 and APOO/MIC23/MIC26.

It localises to the mitochondrion inner membrane. Its subcellular location is the mitochondrion. Functionally, component of the MICOS complex, a large protein complex of the mitochondrial inner membrane that plays crucial roles in the maintenance of crista junctions, inner membrane architecture, and formation of contact sites to the outer membrane. Specifically binds to cardiolipin (in vitro) but not to the precursor lipid phosphatidylglycerol. Plays a crucial role in crista junction formation and mitochondrial function. The protein is MICOS complex subunit Mic27 (Apool) of Mus musculus (Mouse).